The chain runs to 407 residues: 1-deoxy-D-xylulose 5-phosphate reductoisomerase (407 aa).

NADPH is bound by residues Thr25, Gly26, Ser27, Ile28, Asn53, and Asn136. Lys137 is a 1-deoxy-D-xylulose 5-phosphate binding site. An NADPH-binding site is contributed by Glu138. Asp162 provides a ligand contact to Mn(2+). Ser163, Glu164, Ser188, and His211 together coordinate 1-deoxy-D-xylulose 5-phosphate. Residue Glu164 coordinates Mn(2+). Gly217 lines the NADPH pocket. 1-deoxy-D-xylulose 5-phosphate is bound by residues Ser224, Asn229, Lys230, and Glu233. Glu233 contacts Mn(2+).

Belongs to the DXR family. The cofactor is Mg(2+). It depends on Mn(2+) as a cofactor.

It carries out the reaction 2-C-methyl-D-erythritol 4-phosphate + NADP(+) = 1-deoxy-D-xylulose 5-phosphate + NADPH + H(+). It functions in the pathway isoprenoid biosynthesis; isopentenyl diphosphate biosynthesis via DXP pathway; isopentenyl diphosphate from 1-deoxy-D-xylulose 5-phosphate: step 1/6. Its function is as follows. Catalyzes the NADPH-dependent rearrangement and reduction of 1-deoxy-D-xylulose-5-phosphate (DXP) to 2-C-methyl-D-erythritol 4-phosphate (MEP). The chain is 1-deoxy-D-xylulose 5-phosphate reductoisomerase from Rhodopseudomonas palustris (strain HaA2).